A 132-amino-acid chain; its full sequence is uncharacterized protein (132 aa).

The N-terminal stretch at 1–35 (MSFEYRHYKREAKICTCRGGWAHVLLCIGVSQGAC) is a signal peptide. The tract at residues 91 to 132 (AHPGSHSDQPPGVPSRRKSRLERWSPSVSRSTSPPTEAPFCL) is disordered. The span at 115-125 (SPSVSRSTSPP) shows a compositional bias: low complexity.

It is found in the secreted. This is an uncharacterized protein from Homo sapiens (Human).